The primary structure comprises 243 residues: Ion-translocating oxidoreductase complex subunit E (243 aa).

Helical transmembrane passes span L40–L60, A72–L92, D94–G114, A129–I149, I152–F172, and G183–L203.

This sequence belongs to the NqrDE/RnfAE family. As to quaternary structure, the complex is composed of six subunits: RnfA, RnfB, RnfC, RnfD, RnfE and RnfG.

It is found in the cellular chromatophore membrane. Part of a membrane-bound complex that couples electron transfer with translocation of ions across the membrane. Required for nitrogen fixation. Involved in electron transfer to nitrogenase. The protein is Ion-translocating oxidoreductase complex subunit E of Rhodobacter capsulatus (Rhodopseudomonas capsulata).